The sequence spans 715 residues: Fatty acid oxidation complex subunit alpha (715 aa).

An enoyl-CoA hydratase/isomerase region spans residues 1 to 190 (MIYEGKAITV…KVGAVDAVVA (190 aa)). Asp297 is a binding site for substrate. The segment at 312–715 (HDVKQAAVLG…MAKNGQRFFN (404 aa)) is 3-hydroxyacyl-CoA dehydrogenase. Residues Met325, Asp344, 401-403 (VVE), Lys408, and Ser430 each bind NAD(+). His451 functions as the For 3-hydroxyacyl-CoA dehydrogenase activity in the catalytic mechanism. Asn454 contacts NAD(+). Asn501 and Tyr660 together coordinate substrate.

This sequence in the N-terminal section; belongs to the enoyl-CoA hydratase/isomerase family. In the C-terminal section; belongs to the 3-hydroxyacyl-CoA dehydrogenase family. As to quaternary structure, heterotetramer of two alpha chains (FadB) and two beta chains (FadA).

The enzyme catalyses a (3S)-3-hydroxyacyl-CoA + NAD(+) = a 3-oxoacyl-CoA + NADH + H(+). It carries out the reaction a (3S)-3-hydroxyacyl-CoA = a (2E)-enoyl-CoA + H2O. The catalysed reaction is a 4-saturated-(3S)-3-hydroxyacyl-CoA = a (3E)-enoyl-CoA + H2O. It catalyses the reaction (3S)-3-hydroxybutanoyl-CoA = (3R)-3-hydroxybutanoyl-CoA. The enzyme catalyses a (3Z)-enoyl-CoA = a 4-saturated (2E)-enoyl-CoA. It carries out the reaction a (3E)-enoyl-CoA = a 4-saturated (2E)-enoyl-CoA. The protein operates within lipid metabolism; fatty acid beta-oxidation. Involved in the aerobic and anaerobic degradation of long-chain fatty acids via beta-oxidation cycle. Catalyzes the formation of 3-oxoacyl-CoA from enoyl-CoA via L-3-hydroxyacyl-CoA. It can also use D-3-hydroxyacyl-CoA and cis-3-enoyl-CoA as substrate. This chain is Fatty acid oxidation complex subunit alpha, found in Pseudomonas putida (strain GB-1).